Reading from the N-terminus, the 678-residue chain is Pentatricopeptide repeat-containing protein At5g39980, chloroplastic (678 aa).

The N-terminal 64 residues, 1-64, are a transit peptide targeting the chloroplast; it reads MYIEIASSSS…NKKVWRKQPE (64 aa). 14 PPR repeats span residues 154–188, 189–223, 224–258, 259–293, 294–328, 329–363, 364–398, 399–433, 434–468, 469–503, 535–569, 570–604, 605–638, and 639–674; these read SVFA…ALAP, DRYT…RVSG, DLVL…GITP, DLVA…GVLP, NTVS…NCAL, DLTT…DIEP, NVVS…DIEQ, NVVT…GIEP, NAIT…GVEI, DQVL…DNIP, DISV…GYFP, DSNV…GCVF, PDEV…DPNV, and NSKE…GILK.

Belongs to the PPR family. P subfamily.

The protein localises to the plastid. The protein resides in the chloroplast. This is Pentatricopeptide repeat-containing protein At5g39980, chloroplastic from Arabidopsis thaliana (Mouse-ear cress).